Reading from the N-terminus, the 79-residue chain is Dolichol phosphate-mannose biosynthesis regulatory protein (79 aa).

The next 2 helical transmembrane spans lie at 8 to 28 and 50 to 70; these read IGFVMVLFRIFVFGYYTTWVI and IIIPLVLLVVGITAIGTFLGL.

It belongs to the DPM2 family. In terms of assembly, component of the dolichol-phosphate mannose (DPM) synthase complex composed of dpm1, dpm2 and dpm3.

Its subcellular location is the endoplasmic reticulum membrane. Its pathway is protein modification; protein glycosylation. In terms of biological role, regulates the biosynthesis of dolichol phosphate-mannose. Regulatory subunit of the dolichol-phosphate mannose (DPM) synthase complex; essential for the ER localization and stable expression of dpm1. This Dictyostelium discoideum (Social amoeba) protein is Dolichol phosphate-mannose biosynthesis regulatory protein (dpm2-1).